We begin with the raw amino-acid sequence, 286 residues long: Protease HtpX homolog (286 aa).

The next 2 helical transmembrane spans lie at 7-27 (TFML…MIGG) and 29-49 (SGMM…YWFS). A Zn(2+)-binding site is contributed by His-131. Glu-132 is a catalytic residue. Residue His-135 participates in Zn(2+) binding. The next 2 membrane-spanning stretches (helical) occupy residues 146–166 (ISAT…FFGG) and 177–197 (IAGI…QMAI). Glu-202 contributes to the Zn(2+) binding site.

Belongs to the peptidase M48B family. Zn(2+) is required as a cofactor.

It localises to the cell inner membrane. The sequence is that of Protease HtpX homolog from Ralstonia pickettii (strain 12J).